Reading from the N-terminus, the 213-residue chain is MAKNYYDITLALAGICQSARLVQQLAHQGHCDADALHVSLNSIIDMNPSSTLAVFGGSEANLRVGLETLLGVLNASSRQGLNAELTRYTLSLMVLERKLSSAKGALDTLGNRINGLQRQLEHFDLQSETLMSAMAAIYVDVISPLGPRIQVTGSPAVLQSPQVPAKVRATLLAGIRAAVLWHQVGGGRLQLMFSRNRLTTQAKQILAHLTPEL.

The stretch at 79–126 forms a coiled coil; that stretch reads QGLNAELTRYTLSLMVLERKLSSAKGALDTLGNRINGLQRQLEHFDLQ.

Belongs to the HflD family.

The protein resides in the cytoplasm. The protein localises to the cell inner membrane. The chain is High frequency lysogenization protein HflD homolog from Shigella boydii serotype 18 (strain CDC 3083-94 / BS512).